Consider the following 405-residue polypeptide: ATP-sensitive inward rectifier potassium channel 15 (405 aa).

At 1–90 the chain is on the cytoplasmic side; sequence MVARWVKGSE…LQDLWTTVID (90 aa). A helical transmembrane segment spans residues 91–117; sequence MKWRYKLTLFAATFVMTWFLFGVVYYA. The Extracellular segment spans residues 118 to 143; sequence IAFIHGDLELGESNSNHTPCIMKVDS. The segment at residues 144-160 is an intramembrane region (helical; Pore-forming); it reads LTGAFLFSLESQTTIGY. The Selectivity filter signature appears at 157 to 162; the sequence is TIGYGV. Over 161 to 169 the chain is Extracellular; it reads GVRSITEEC. Residues 170-195 traverse the membrane as a helical segment; it reads PHAIFLLVAQLVITTLIEIFITGTFL. Residues 196–405 lie on the Cytoplasmic side of the membrane; it reads AKIARPKKRA…RSLLLQQSNV (210 aa).

The protein belongs to the inward rectifier-type potassium channel (TC 1.A.2.1) family. KCNJ15 subfamily. In terms of assembly, can form heteromultimeric channels with Kir5.1/KCNJ16. Interacts with PATJ.

Its subcellular location is the membrane. It is found in the cell membrane. The catalysed reaction is K(+)(in) = K(+)(out). Channel activity is regulated by variations of cytosolic pH; reversibly inhibited by acidic pH values. Inhibited by Ba(2+) and Cs(+) in a voltage-dependent manner. Its function is as follows. Inward rectifier potassium channels are characterized by a greater tendency to allow potassium to flow into the cell rather than out of it. Their voltage dependence is regulated by the concentration of extracellular potassium; as external potassium is raised, the voltage range of the channel opening shifts to more positive voltages. The inward rectification is mainly due to the blockage of outward current by internal magnesium. This chain is ATP-sensitive inward rectifier potassium channel 15 (Kcnj15), found in Rattus norvegicus (Rat).